The chain runs to 527 residues: T-complex protein 1 subunit delta (527 aa).

The protein belongs to the TCP-1 chaperonin family. As to quaternary structure, heterooligomeric complex of about 850 to 900 kDa that forms two stacked rings, 12 to 16 nm in diameter.

The protein resides in the cytoplasm. Functionally, molecular chaperone; assists the folding of proteins upon ATP hydrolysis. Known to play a role, in vitro, in the folding of actin and tubulin. This Schizosaccharomyces pombe (strain 972 / ATCC 24843) (Fission yeast) protein is T-complex protein 1 subunit delta (cct4).